The chain runs to 241 residues: Small ribosomal subunit protein uS2 (241 aa).

It belongs to the universal ribosomal protein uS2 family.

The chain is Small ribosomal subunit protein uS2 from Pectobacterium atrosepticum (strain SCRI 1043 / ATCC BAA-672) (Erwinia carotovora subsp. atroseptica).